The sequence spans 379 residues: Chaperone protein DnaJ (379 aa).

Positions 5–70 (DYYEVLGVGK…EKKAAYDQYG (66 aa)) constitute a J domain. The segment at 139–217 (GHEAQIRVPH…CHGQGKLKSQ (79 aa)) adopts a CR-type zinc-finger fold. Zn(2+) is bound by residues C152, C155, C169, C172, C191, C194, C205, and C208. CXXCXGXG motif repeat units lie at residues 152–159 (CDHCHGNG), 169–176 (CPTCHGAG), 191–198 (CPKCHGSG), and 205–212 (CTKCHGQG). Positions 356 to 379 (VHEGGSRHSPQEQSWLDKVKSFFS) are disordered.

It belongs to the DnaJ family. Homodimer. It depends on Zn(2+) as a cofactor.

It is found in the cytoplasm. Functionally, participates actively in the response to hyperosmotic and heat shock by preventing the aggregation of stress-denatured proteins and by disaggregating proteins, also in an autonomous, DnaK-independent fashion. Unfolded proteins bind initially to DnaJ; upon interaction with the DnaJ-bound protein, DnaK hydrolyzes its bound ATP, resulting in the formation of a stable complex. GrpE releases ADP from DnaK; ATP binding to DnaK triggers the release of the substrate protein, thus completing the reaction cycle. Several rounds of ATP-dependent interactions between DnaJ, DnaK and GrpE are required for fully efficient folding. Also involved, together with DnaK and GrpE, in the DNA replication of plasmids through activation of initiation proteins. This chain is Chaperone protein DnaJ, found in Cupriavidus pinatubonensis (strain JMP 134 / LMG 1197) (Cupriavidus necator (strain JMP 134)).